Here is a 141-residue protein sequence, read N- to C-terminus: Hemoglobin subunit alpha (141 aa).

Positions 1–141 (VLSSADKNNV…VSTVLTSKYR (141 aa)) constitute a Globin domain. Ser-3 carries the phosphoserine modification. Lys-7 and Lys-11 each carry N6-succinyllysine. Lys-16 carries the N6-acetyllysine; alternate modification. Lys-16 carries the post-translational modification N6-succinyllysine; alternate. At Tyr-24 the chain carries Phosphotyrosine. At Ser-35 the chain carries Phosphoserine. An N6-succinyllysine modification is found at Lys-40. Position 49 is a phosphoserine (Ser-49). His-58 lines the O2 pocket. His-87 is a binding site for heme b. Residue Ser-102 is modified to Phosphoserine. Thr-108 is subject to Phosphothreonine. Ser-124 bears the Phosphoserine mark. Phosphothreonine is present on residues Thr-134 and Thr-137. Ser-138 carries the phosphoserine modification.

This sequence belongs to the globin family. In terms of assembly, heterotetramer of two alpha chains and two beta chains. As to expression, red blood cells.

In terms of biological role, involved in oxygen transport from the lung to the various peripheral tissues. Hemopressin acts as an antagonist peptide of the cannabinoid receptor CNR1. Hemopressin-binding efficiently blocks cannabinoid receptor CNR1 and subsequent signaling. The sequence is that of Hemoglobin subunit alpha (HBA) from Panthera tigris sumatrae (Sumatran tiger).